The following is a 551-amino-acid chain: Cilia- and flagella-associated protein 45 (551 aa).

Disordered stretches follow at residues Met1–Val30 and Arg461–Glu489. Positions Asn157–Arg526 form a coiled coil.

The protein belongs to the CFAP45 family. Microtubule inner protein component of sperm flagellar doublet microtubules. Interacts with AK8; dimerization with AK8 may create a cavity at the interface of the dimer that can accommodate AMP. Interacts with CFAP52. Interacts with ENKUR. Directly interacts with DNALI1. Interacts with DNAH11. Interacts with DNAI1. As to expression, expressed in respiratory cells and in sperm (at protein level). Expressed in nasopharyngeal epithelium and trachea.

Its subcellular location is the cytoplasm. It localises to the cytoskeleton. It is found in the cilium axoneme. The protein localises to the flagellum axoneme. The protein resides in the cell projection. Its subcellular location is the cilium. It localises to the flagellum. Its function is as follows. Microtubule inner protein (MIP) part of the dynein-decorated doublet microtubules (DMTs) in cilia axoneme, which is required for motile cilia beating. It is an AMP-binding protein that may facilitate dynein ATPase-dependent ciliary and flagellar beating via adenine nucleotide homeostasis. May function as a donor of AMP to AK8 and hence promote ADP production. The sequence is that of Cilia- and flagella-associated protein 45 from Homo sapiens (Human).